The following is a 491-amino-acid chain: Protein DETOXIFICATION 28 (491 aa).

Transmembrane regions (helical) follow at residues 47 to 67 (IVGP…ITQA), 77 to 97 (LAAI…LFIG), 127 to 147 (IVLF…TPIL), 160 to 180 (SGII…FFPI), 192 to 212 (VIAI…WLFV), 228 to 248 (VSWW…GCPL), 272 to 292 (GIMV…TGNL), 302 to 322 (MSIC…FFAG), 352 to 372 (IIGI…GWMF), 387 to 407 (ILLS…GVAV), 414 to 434 (LVAF…GIVM), and 444 to 464 (GIWA…LIFI).

The protein belongs to the multi antimicrobial extrusion (MATE) (TC 2.A.66.1) family.

The protein resides in the membrane. This Arabidopsis thaliana (Mouse-ear cress) protein is Protein DETOXIFICATION 28.